A 185-amino-acid polypeptide reads, in one-letter code: Peptidyl-tRNA hydrolase (185 aa).

Residue Tyr14 coordinates tRNA. His19 (proton acceptor) is an active-site residue. TRNA-binding residues include Phe64, Asn66, and Asn112.

It belongs to the PTH family. In terms of assembly, monomer.

It is found in the cytoplasm. It carries out the reaction an N-acyl-L-alpha-aminoacyl-tRNA + H2O = an N-acyl-L-amino acid + a tRNA + H(+). Hydrolyzes ribosome-free peptidyl-tRNAs (with 1 or more amino acids incorporated), which drop off the ribosome during protein synthesis, or as a result of ribosome stalling. Functionally, catalyzes the release of premature peptidyl moieties from peptidyl-tRNA molecules trapped in stalled 50S ribosomal subunits, and thus maintains levels of free tRNAs and 50S ribosomes. This Caldanaerobacter subterraneus subsp. tengcongensis (strain DSM 15242 / JCM 11007 / NBRC 100824 / MB4) (Thermoanaerobacter tengcongensis) protein is Peptidyl-tRNA hydrolase.